Here is a 405-residue protein sequence, read N- to C-terminus: MASHKDVKKVVLAYSGGLDTSIILKWLQTELGAEVVTFTADLGQGEELEPARKKAEMLGIKEIYIEDVREEFVRDFVFPMFRANAVYEGVYLLGTSIARPLISKHLIDIARKTGADAIAHGATGKGNDQVRFELSAYALNPDIKIIAPWRDWSFKSRTDLLEFAEKHQIPVAKDKKGEAPFSVDANLLHSSSEGKVLEDPAREAPEYVHMRTISPEAAPDKATVIKVGFERGDAVSIDGVRMSPATLLAKLNEYGRDNGIGRLDLVENRFVGMKSRGVYETPGGTILLAAHRAIESITLDRGAAHLKDELMPRYAELIYYGFWFSPEREMLQAAIDRSQEHVEGEVTLKLYKGNVMVIGRESGKSLYSDKLVTFEDDQGAYDQKDAAGFIKLNALRLRTLAARNR.

ATP is bound by residues 13–21 (AYSGGLDTS) and Ala40. Positions 91 and 96 each coordinate L-citrulline. Gly121 serves as a coordination point for ATP. Positions 123, 127, and 128 each coordinate L-aspartate. Position 127 (Asn127) interacts with L-citrulline. 5 residues coordinate L-citrulline: Arg131, Ser182, Ser191, Glu267, and Tyr279.

The protein belongs to the argininosuccinate synthase family. Type 1 subfamily. As to quaternary structure, homotetramer.

It localises to the cytoplasm. The enzyme catalyses L-citrulline + L-aspartate + ATP = 2-(N(omega)-L-arginino)succinate + AMP + diphosphate + H(+). It participates in amino-acid biosynthesis; L-arginine biosynthesis; L-arginine from L-ornithine and carbamoyl phosphate: step 2/3. This chain is Argininosuccinate synthase, found in Rhizobium meliloti (strain 1021) (Ensifer meliloti).